Reading from the N-terminus, the 306-residue chain is Putative F-box protein At1g47300 (306 aa).

Positions 1–45 (MISDSIPKELILEIMLRLPAKSIARFHCVSKQWASMLSRPYFTEL) constitute an F-box domain. Residues 235 to 278 (DPKLLESKEEEEEEEEEEEEEEEEEEEEEEEEEEEESKEREKEK) form a disordered region. Positions 242–270 (KEEEEEEEEEEEEEEEEEEEEEEEEEEEE) are enriched in acidic residues.

The protein is Putative F-box protein At1g47300 of Arabidopsis thaliana (Mouse-ear cress).